The following is a 928-amino-acid chain: Kinesin heavy chain (928 aa).

In terms of domain architecture, Kinesin motor spans 7–330; that stretch reads SIKVVARFRP…LRFGMRAKSI (324 aa). ATP contacts are provided by residues 88–95 and 238–245; these read GQTGAGKS and GSEKVGKT. The stretch at 343–866 forms a coiled coil; it reads AELKQMLAKA…VKDRLEAAKA (524 aa). Residues 395 to 409 are compositionally biased toward low complexity; it reads SKSASTTARPSTPSR. Disordered stretches follow at residues 395 to 434 and 893 to 928; these read SKSASTTARPSTPSRLLPESRAETPAISDRAGTPSLPLDK and GGGDAVAGATATNPTIATLQQNPPENKRSSWFFQKS. A compositionally biased stretch (polar residues) spans 905 to 928; that stretch reads NPTIATLQQNPPENKRSSWFFQKS.

The protein belongs to the TRAFAC class myosin-kinesin ATPase superfamily. Kinesin family. Kinesin subfamily.

It is found in the cytoplasm. It localises to the cytoskeleton. In terms of biological role, kinesin is a microtubule-associated force-producing protein that may play a role in organelle transport. Its motor activity is directed toward the microtubule's plus end. This chain is Kinesin heavy chain (kin), found in Neurospora crassa (strain ATCC 24698 / 74-OR23-1A / CBS 708.71 / DSM 1257 / FGSC 987).